The sequence spans 114 residues: Large ribosomal subunit protein bL19 (114 aa).

It belongs to the bacterial ribosomal protein bL19 family.

Functionally, this protein is located at the 30S-50S ribosomal subunit interface and may play a role in the structure and function of the aminoacyl-tRNA binding site. This Thermobifida fusca (strain YX) protein is Large ribosomal subunit protein bL19.